A 146-amino-acid chain; its full sequence is Ribosome-binding factor A (146 aa).

A disordered region spans residues Glu127–Ser146.

This sequence belongs to the RbfA family. In terms of assembly, monomer. Binds 30S ribosomal subunits, but not 50S ribosomal subunits or 70S ribosomes.

Its subcellular location is the cytoplasm. Functionally, one of several proteins that assist in the late maturation steps of the functional core of the 30S ribosomal subunit. Associates with free 30S ribosomal subunits (but not with 30S subunits that are part of 70S ribosomes or polysomes). Required for efficient processing of 16S rRNA. May interact with the 5'-terminal helix region of 16S rRNA. In Renibacterium salmoninarum (strain ATCC 33209 / DSM 20767 / JCM 11484 / NBRC 15589 / NCIMB 2235), this protein is Ribosome-binding factor A.